Here is a 189-residue protein sequence, read N- to C-terminus: GTPase NRas (189 aa).

GTP is bound by residues 10–18 (GAGGVGKSA) and 29–30 (VD). Residues 32 to 40 (YDPTIEDSY) carry the Effector region motif. 57-61 (DTAGQ) lines the GTP pocket. Phosphoserine is present on serine 89. A GTP-binding site is contributed by 116–119 (NKCD). Residues 166–185 (YRMKKLNSNDDGTQGCMGLP) form a hypervariable region region. Residue lysine 170 forms a Glycyl lysine isopeptide (Lys-Gly) (interchain with G-Cter in ubiquitin) linkage. The S-palmitoyl cysteine moiety is linked to residue cysteine 181. Cysteine 186 is lipidated: S-farnesyl cysteine. A propeptide spans 187-189 (VVM) (removed in mature form).

Belongs to the small GTPase superfamily. Ras family. As to quaternary structure, interacts (active GTP-bound form preferentially) with RGS14. Interacts (active GTP-bound form) with RASSF7. Interacts (active GTP-bound form) with both SHOC2 and PP1c (all isoforms) to form a tertiary complex; SHOC2 and PP1c preferably bind M-Ras/MRAS, but they also bind K-Ras/KRAS, N-Ras/NRAS and H-Ras/HRAS. In terms of processing, palmitoylated by the ZDHHC9-GOLGA7 complex. Depalmitoylated by ABHD17A, ABHD17B and ABHD17C. A continuous cycle of de- and re-palmitoylation regulates rapid exchange between plasma membrane and Golgi. Acetylation at Lys-104 prevents interaction with guanine nucleotide exchange factors (GEFs). Post-translationally, ubiquitinated by the BCR(LZTR1) E3 ubiquitin ligase complex at Lys-170 in a non-degradative manner, leading to inhibit Ras signaling by decreasing Ras association with membranes. In terms of processing, phosphorylation at Ser-89 enhances NRAS association with its downstream effectors.

The protein resides in the cell membrane. It is found in the golgi apparatus membrane. It carries out the reaction GTP + H2O = GDP + phosphate + H(+). With respect to regulation, alternates between an inactive form bound to GDP and an active form bound to GTP. Activated by a guanine nucleotide-exchange factor (GEF) and inactivated by a GTPase-activating protein (GAP). Ras proteins bind GDP/GTP and possess intrinsic GTPase activity. The polypeptide is GTPase NRas (NRAS) (Cavia porcellus (Guinea pig)).